Consider the following 309-residue polypeptide: Homoserine O-acetyltransferase (309 aa).

The active-site Acyl-thioester intermediate is the C142. 2 residues coordinate substrate: K163 and S192. Catalysis depends on H235, which acts as the Proton acceptor. E237 is a catalytic residue. R249 is a substrate binding site.

It belongs to the MetA family.

The protein localises to the cytoplasm. The enzyme catalyses L-homoserine + acetyl-CoA = O-acetyl-L-homoserine + CoA. The protein operates within amino-acid biosynthesis; L-methionine biosynthesis via de novo pathway; O-acetyl-L-homoserine from L-homoserine: step 1/1. Transfers an acetyl group from acetyl-CoA to L-homoserine, forming acetyl-L-homoserine. In Methanomethylophilus alvi (strain Mx1201), this protein is Homoserine O-acetyltransferase.